A 293-amino-acid chain; its full sequence is Ribosomal protein L11 methyltransferase (293 aa).

Residues Thr145, Gly166, Asp188, and Asn230 each coordinate S-adenosyl-L-methionine.

Belongs to the methyltransferase superfamily. PrmA family.

It localises to the cytoplasm. It catalyses the reaction L-lysyl-[protein] + 3 S-adenosyl-L-methionine = N(6),N(6),N(6)-trimethyl-L-lysyl-[protein] + 3 S-adenosyl-L-homocysteine + 3 H(+). In terms of biological role, methylates ribosomal protein L11. The protein is Ribosomal protein L11 methyltransferase of Haemophilus ducreyi (strain 35000HP / ATCC 700724).